The following is a 122-amino-acid chain: Small ribosomal subunit protein uS13c (122 aa).

A disordered region spans residues 102–122; the sequence is RTRTNARTRRGAKKTVAGKKK.

The protein belongs to the universal ribosomal protein uS13 family. Part of the 30S ribosomal subunit.

The protein localises to the plastid. Its subcellular location is the chloroplast. Located at the top of the head of the 30S subunit, it contacts several helices of the 16S rRNA. This Guillardia theta (Cryptophyte) protein is Small ribosomal subunit protein uS13c.